Here is a 443-residue protein sequence, read N- to C-terminus: Tubulin beta chain (443 aa).

GTP-binding residues include Q11, E69, S138, G142, T143, G144, N204, and N226. E69 contributes to the Mg(2+) binding site. Residues 424 to 443 form a disordered region; the sequence is QYQDASAEEEGEFEGEEEEA. The span at 429–443 shows a compositional bias: acidic residues; that stretch reads SAEEEGEFEGEEEEA.

This sequence belongs to the tubulin family. In terms of assembly, dimer of alpha and beta chains. A typical microtubule is a hollow water-filled tube with an outer diameter of 25 nm and an inner diameter of 15 nM. Alpha-beta heterodimers associate head-to-tail to form protofilaments running lengthwise along the microtubule wall with the beta-tubulin subunit facing the microtubule plus end conferring a structural polarity. Microtubules usually have 13 protofilaments but different protofilament numbers can be found in some organisms and specialized cells. Mg(2+) is required as a cofactor.

The protein localises to the cytoplasm. Its subcellular location is the cytoskeleton. Functionally, tubulin is the major constituent of microtubules, a cylinder consisting of laterally associated linear protofilaments composed of alpha- and beta-tubulin heterodimers. Microtubules grow by the addition of GTP-tubulin dimers to the microtubule end, where a stabilizing cap forms. Below the cap, tubulin dimers are in GDP-bound state, owing to GTPase activity of alpha-tubulin. In Chlamydomonas incerta, this protein is Tubulin beta chain (TUBB).